Consider the following 80-residue polypeptide: Translation initiation factor IF-1 (80 aa).

Residues glutamate 6–arginine 80 enclose the S1-like domain.

Belongs to the IF-1 family. In terms of assembly, component of the 30S ribosomal translation pre-initiation complex which assembles on the 30S ribosome in the order IF-2 and IF-3, IF-1 and N-formylmethionyl-tRNA(fMet); mRNA recruitment can occur at any time during PIC assembly.

The protein resides in the cytoplasm. Its function is as follows. One of the essential components for the initiation of protein synthesis. Stabilizes the binding of IF-2 and IF-3 on the 30S subunit to which N-formylmethionyl-tRNA(fMet) subsequently binds. Helps modulate mRNA selection, yielding the 30S pre-initiation complex (PIC). Upon addition of the 50S ribosomal subunit IF-1, IF-2 and IF-3 are released leaving the mature 70S translation initiation complex. This Deinococcus radiodurans (strain ATCC 13939 / DSM 20539 / JCM 16871 / CCUG 27074 / LMG 4051 / NBRC 15346 / NCIMB 9279 / VKM B-1422 / R1) protein is Translation initiation factor IF-1.